Reading from the N-terminus, the 367-residue chain is Glutamate 5-kinase (367 aa).

Lys-10 lines the ATP pocket. Substrate contacts are provided by Ser-50, Asp-137, and Asn-149. Residues 169 to 170 (TD) and 211 to 217 (TGGMSTK) each bind ATP. Residues 275–353 (AGEITVDDGA…QQIAEILGYE (79 aa)) enclose the PUA domain.

It belongs to the glutamate 5-kinase family.

It is found in the cytoplasm. It carries out the reaction L-glutamate + ATP = L-glutamyl 5-phosphate + ADP. The protein operates within amino-acid biosynthesis; L-proline biosynthesis; L-glutamate 5-semialdehyde from L-glutamate: step 1/2. Functionally, catalyzes the transfer of a phosphate group to glutamate to form L-glutamate 5-phosphate. The protein is Glutamate 5-kinase of Pectobacterium atrosepticum (strain SCRI 1043 / ATCC BAA-672) (Erwinia carotovora subsp. atroseptica).